Reading from the N-terminus, the 471-residue chain is Transcription initiation factor TFIID subunit 7-like (471 aa).

Disordered regions lie at residues 1–84 (MERG…RQGT), 192–211 (SPEG…TGPT), and 328–377 (EMMG…EELE). At Ser-199 the chain carries Phosphoserine. Residues 347–377 (GDDDDDEDEDDEDYGNEKEEEETDNSEEELE) are compositionally biased toward acidic residues. The stretch at 358–433 (EDYGNEKEEE…QKELLRKVEN (76 aa)) forms a coiled coil.

Belongs to the TAF7 family. As to quaternary structure, TFIID is composed of TATA binding protein (TBP) and a number of TBP-associated factors (TAFs). TAF7L may replace TAF7 in a spermatogenesis-specific form of TFIID. Interacts with TBP; the interaction occurs in a sub-population of cells (pachytene and haploid round spermatids) and is developmentally regulated through differential intracellular localization of the two proteins. Interacts with TAF1. Testis-specific (at protein level). Expressed during spermatogenesis from spermatogonia stage up to the stage of round spermatids.

It is found in the nucleus. It localises to the cytoplasm. In terms of biological role, probably functions as a spermatogenesis-specific component of the DNA-binding general transcription factor complex TFIID, a multimeric protein complex that plays a central role in mediating promoter responses to various activators and repressors. May play a role in spermatogenesis. The polypeptide is Transcription initiation factor TFIID subunit 7-like (Taf7l) (Mus musculus (Mouse)).